The chain runs to 569 residues: AsmA family protein YicH (569 aa).

The Cytoplasmic portion of the chain corresponds to 1 to 6; it reads MKFIGK. Residues 7-27 traverse the membrane as a helical segment; it reads LLLYILIALLVAIAGLYFLLQ. Residues 28–569 lie on the Periplasmic side of the membrane; sequence TRWGAEHISA…GEVTSTEPVR (542 aa).

The protein belongs to the AsmA family.

The protein resides in the cell inner membrane. This is AsmA family protein YicH (yicH) from Escherichia coli (strain K12).